Reading from the N-terminus, the 240-residue chain is L-isoleucine-4-hydroxylase (240 aa).

Positions 159, 161, and 212 each coordinate Fe cation.

The protein belongs to the iron/ascorbate-dependent oxidoreductase family. The cofactor is L-ascorbate. Requires Fe(2+) as cofactor.

The catalysed reaction is L-isoleucine + 2-oxoglutarate + O2 = (4S)-4-hydroxy-L-isoleucine + succinate + CO2. Catalyzes the hydroxylation of L-isoleucine to produce (4S)-4-hydroxy-L-isoleucine. Can also catalyze the hydroxylation of L-leucine, L-norvaline, L-norleucine and L-allo-isoleucine, as well as the sulfoxidation of L-methionine, L-ethionine, S-methyl-L-cysteine, S-ethyl-L-cysteine, and S-allyl-L-cysteine. This is L-isoleucine-4-hydroxylase from Bacillus thuringiensis.